We begin with the raw amino-acid sequence, 858 residues long: DNA mismatch repair protein MutS (858 aa).

600-607 lines the ATP pocket; that stretch reads GPNMSGKS. The disordered stretch occupies residues 803 to 823; sequence EAASDEVDDNNSENSPMTDAE.

Belongs to the DNA mismatch repair MutS family.

In terms of biological role, this protein is involved in the repair of mismatches in DNA. It is possible that it carries out the mismatch recognition step. This protein has a weak ATPase activity. This is DNA mismatch repair protein MutS from Lactobacillus helveticus (strain DPC 4571).